A 500-amino-acid polypeptide reads, in one-letter code: Cytochrome P450 2C11 (500 aa).

Heme is bound at residue cysteine 435.

The protein belongs to the cytochrome P450 family. It depends on heme as a cofactor. Liver and kidney; male-specific.

The protein resides in the endoplasmic reticulum membrane. The protein localises to the microsome membrane. It carries out the reaction an organic molecule + reduced [NADPH--hemoprotein reductase] + O2 = an alcohol + oxidized [NADPH--hemoprotein reductase] + H2O + H(+). It catalyses the reaction testosterone + reduced [NADPH--hemoprotein reductase] + O2 = 2alpha,17beta-dihydroxyandrost-4-en-3-one + oxidized [NADPH--hemoprotein reductase] + H2O + H(+). The catalysed reaction is testosterone + reduced [NADPH--hemoprotein reductase] + O2 = 16alpha,17beta-dihydroxyandrost-4-en-3-one + oxidized [NADPH--hemoprotein reductase] + H2O + H(+). The enzyme catalyses (5Z,8Z,11Z,14Z)-eicosatetraenoate + reduced [NADPH--hemoprotein reductase] + O2 = (8R,9S)-epoxy-(5Z,11Z,14Z)-eicosatrienoate + oxidized [NADPH--hemoprotein reductase] + H2O + H(+). It carries out the reaction (5Z,8Z,11Z,14Z)-eicosatetraenoate + reduced [NADPH--hemoprotein reductase] + O2 = (8S,9R)-epoxy-(5Z,11Z,14Z)-eicosatrienoate + oxidized [NADPH--hemoprotein reductase] + H2O + H(+). It catalyses the reaction (5Z,8Z,11Z,14Z)-eicosatetraenoate + reduced [NADPH--hemoprotein reductase] + O2 = (11R,12S)-epoxy-(5Z,8Z,14Z)-eicosatrienoate + oxidized [NADPH--hemoprotein reductase] + H2O + H(+). The catalysed reaction is (5Z,8Z,11Z,14Z)-eicosatetraenoate + reduced [NADPH--hemoprotein reductase] + O2 = (11S,12R)-epoxy-(5Z,8Z,14Z)-eicosatrienoate + oxidized [NADPH--hemoprotein reductase] + H2O + H(+). The enzyme catalyses (5Z,8Z,11Z,14Z)-eicosatetraenoate + reduced [NADPH--hemoprotein reductase] + O2 = (14R,15S)-epoxy-(5Z,8Z,11Z)-eicosatrienoate + oxidized [NADPH--hemoprotein reductase] + H2O + H(+). It carries out the reaction (5Z,8Z,11Z,14Z)-eicosatetraenoate + reduced [NADPH--hemoprotein reductase] + O2 = (14S,15R)-epoxy-(5Z,8Z,11Z)-eicosatrienoate + oxidized [NADPH--hemoprotein reductase] + H2O + H(+). It catalyses the reaction (5Z,8Z,11Z,14Z,17Z)-eicosapentaenoate + reduced [NADPH--hemoprotein reductase] + O2 = 8,9-epoxy-(5Z,11Z,14Z,17Z)-eicosatetraenoate + oxidized [NADPH--hemoprotein reductase] + H2O + H(+). The catalysed reaction is (5Z,8Z,11Z,14Z,17Z)-eicosapentaenoate + reduced [NADPH--hemoprotein reductase] + O2 = 11,12-epoxy-(5Z,8Z,14Z,17Z)-eicosatetraenoate + oxidized [NADPH--hemoprotein reductase] + H2O + H(+). The enzyme catalyses (5Z,8Z,11Z,14Z,17Z)-eicosapentaenoate + reduced [NADPH--hemoprotein reductase] + O2 = 14,15-epoxy-(5Z,8Z,11Z,17Z)-eicosatetraenoate + oxidized [NADPH--hemoprotein reductase] + H2O + H(+). It carries out the reaction (5Z,8Z,11Z,14Z,17Z)-eicosapentaenoate + reduced [NADPH--hemoprotein reductase] + O2 = (17S,18R)-epoxy-(5Z,8Z,11Z,14Z)-eicosatetraenoate + oxidized [NADPH--hemoprotein reductase] + H2O + H(+). It catalyses the reaction (5Z,8Z,11Z,14Z,17Z)-eicosapentaenoate + reduced [NADPH--hemoprotein reductase] + O2 = (17R,18S)-epoxy-(5Z,8Z,11Z,14Z)-eicosatetraenoate + oxidized [NADPH--hemoprotein reductase] + H2O + H(+). It participates in lipid metabolism; arachidonate metabolism. It functions in the pathway steroid metabolism. A cytochrome P450 monooxygenase involved in the metabolism of steroid hormones and fatty acids. Catalyzes the hydroxylation of carbon-hydrogen bonds. Metabolizes testosterone to 2alpha- and 16alpha-hydroxytestosterone. Catalyzes the epoxidation of double bonds of polyunsaturated fatty acids (PUFAs). Converts arachidonic acid (ARA, C20:4(n-6)) primarily to epoxyeicosatrienoic acid (EET) regioisomers, 8,9-, 11,12-, and 14,15-EET, with both R,S and S,R stereochemistry. Preferentially produces 11R,12S-EET enantiomer. To a lesser extent, catalyzes the hydroxylation of arachidonic acid producing hydroxyeicosatetraenoates (HETEs). Metabolizes eicosapentaenoic acid (EPA, C20:5(n-3)) to epoxyeicosatetraenoic acid (EETeTr) regioisomers, 8,9-, 11,12-, 14,15-, and 17,18-EETeTr, preferentially producing 17R,18S-EETeTr enantiomer. Mechanistically, uses molecular oxygen inserting one oxygen atom into a substrate, and reducing the second into a water molecule, with two electrons provided by NADPH via cytochrome P450 reductase (NADPH--hemoprotein reductase). The polypeptide is Cytochrome P450 2C11 (Cyp2c11) (Rattus norvegicus (Rat)).